A 128-amino-acid polypeptide reads, in one-letter code: uncharacterized protein (128 aa).

The next 3 membrane-spanning stretches (helical) occupy residues Met19–Ser41, Leu54–Gln71, and Pro75–Leu97.

The protein resides in the cell membrane. This is an uncharacterized protein from Pasteurella multocida (strain Pm70).